A 462-amino-acid chain; its full sequence is 3-isopropylmalate dehydratase large subunit (462 aa).

[4Fe-4S] cluster-binding residues include Cys337, Cys397, and Cys400.

The protein belongs to the aconitase/IPM isomerase family. LeuC type 1 subfamily. Heterodimer of LeuC and LeuD. [4Fe-4S] cluster serves as cofactor.

It catalyses the reaction (2R,3S)-3-isopropylmalate = (2S)-2-isopropylmalate. It functions in the pathway amino-acid biosynthesis; L-leucine biosynthesis; L-leucine from 3-methyl-2-oxobutanoate: step 2/4. Its function is as follows. Catalyzes the isomerization between 2-isopropylmalate and 3-isopropylmalate, via the formation of 2-isopropylmaleate. This is 3-isopropylmalate dehydratase large subunit from Listeria monocytogenes serovar 1/2a (strain ATCC BAA-679 / EGD-e).